Consider the following 747-residue polypeptide: Putative T-box protein 31 (747 aa).

The T-box DNA-binding region spans glutamine 33–aspartate 199. Disordered stretches follow at residues serine 268–aspartate 289 and serine 332–lysine 364. Residues serine 332–serine 358 show a composition bias toward polar residues.

Its subcellular location is the nucleus. This chain is Putative T-box protein 31 (tbx-31), found in Caenorhabditis elegans.